The sequence spans 66 residues: Pteroicidin-alpha (66 aa).

An N-terminal signal peptide occupies residues 1–22 (MKCIALFLVLSMVVLMAEPGEA). Residue Arg-43 is modified to Arginine amide; partial. A propeptide spanning residues 44–66 (GKNRDMAEQQELERAFDRERAFA) is cleaved from the precursor.

The protein belongs to the pleurocidin family. In terms of processing, this peptide exists in N-terminally amidated and non-amidated forms. The amidated form is more active and has a greater alpha-helix content than the non-amidated form. As to expression, expressed in gill, skin, intestine, spleen, anterior kidney, and blood cells.

The protein resides in the secreted. The amidated peptide is bactericidal on human pathogens like S.aureus or E.coli, as well as on the fish pathogen A.salmonicida. May also be active against a variety of fungi. It can kill bacteria in less than 30 minutes (S.aureus) and 120 minutes (V.vulnificus). It induces hemolysis of erythrocytes from human and fishes (sea bass and lesser-spotted dogfish). Its function is as follows. The non-amidated peptide only inhibits growth of human pathogens like S.aureus or E.coli, and the fish pathogen A.salmonicida. Induces hemolysis of erythrocytes from human and fishes (sea bass and lesser-spotted dogfish). The chain is Pteroicidin-alpha from Pterois volitans (Red lionfish).